We begin with the raw amino-acid sequence, 152 residues long: Nucleoside diphosphate kinase B (152 aa).

An interaction with AKAP13 region spans residues 1–66; sequence MANLERTFIA…DRPFFPGLVK (66 aa). ATP contacts are provided by lysine 12, phenylalanine 60, arginine 88, threonine 94, arginine 105, and asparagine 115. The active-site Pros-phosphohistidine intermediate is the histidine 118.

It belongs to the NDK family. In terms of assembly, hexamer of two different chains: An and B (A6, A5B, A4B2, A3B3, A2B4, AB5, B6). Interacts with CAPN8. Interacts with AKAP13. Interacts with ITGB1BP1 (via C-terminal domain region). Interacts with BCL2L10. Mg(2+) serves as cofactor. As to expression, expressed in the base region of the oxyntic and pyloric mucosae.

The protein resides in the cytoplasm. It is found in the cell projection. The protein localises to the lamellipodium. It localises to the ruffle. Its subcellular location is the nucleus. The enzyme catalyses a 2'-deoxyribonucleoside 5'-diphosphate + ATP = a 2'-deoxyribonucleoside 5'-triphosphate + ADP. The catalysed reaction is a ribonucleoside 5'-diphosphate + ATP = a ribonucleoside 5'-triphosphate + ADP. It catalyses the reaction ATP + protein L-histidine = ADP + protein N-phospho-L-histidine.. Functionally, major role in the synthesis of nucleoside triphosphates other than ATP. The ATP gamma phosphate is transferred to the NDP beta phosphate via a ping-pong mechanism, using a phosphorylated active-site intermediate. Negatively regulates Rho activity by interacting with AKAP13/LBC. Acts as a transcriptional activator of the MYC gene; binds DNA non-specifically. Binds to both single-stranded guanine- and cytosine-rich strands within the nuclease hypersensitive element (NHE) III(1) region of the MYC gene promoter. Does not bind to duplex NHE III(1). Has G-quadruplex (G4) DNA-binding activity, which is independent of its nucleotide-binding and kinase activity. Binds both folded and unfolded G4 with similar low nanomolar affinities. Stabilizes folded G4s regardless of whether they are prefolded or not. Exhibits histidine protein kinase activity. In Mus musculus (Mouse), this protein is Nucleoside diphosphate kinase B (Nme2).